The following is a 105-amino-acid chain: Heat shock protein HspQ (105 aa).

This sequence belongs to the HspQ family.

Its subcellular location is the cytoplasm. Involved in the degradation of certain denaturated proteins, including DnaA, during heat shock stress. The sequence is that of Heat shock protein HspQ from Escherichia fergusonii (strain ATCC 35469 / DSM 13698 / CCUG 18766 / IAM 14443 / JCM 21226 / LMG 7866 / NBRC 102419 / NCTC 12128 / CDC 0568-73).